The following is a 247-amino-acid chain: Pyridoxine 5'-phosphate synthase (247 aa).

Residue asparagine 12 coordinates 3-amino-2-oxopropyl phosphate. Position 14–15 (14–15 (DH)) interacts with 1-deoxy-D-xylulose 5-phosphate. Arginine 23 contributes to the 3-amino-2-oxopropyl phosphate binding site. Catalysis depends on histidine 48, which acts as the Proton acceptor. Residues arginine 50 and histidine 55 each coordinate 1-deoxy-D-xylulose 5-phosphate. Glutamate 75 (proton acceptor) is an active-site residue. Threonine 105 contributes to the 1-deoxy-D-xylulose 5-phosphate binding site. Histidine 196 serves as the catalytic Proton donor. 3-amino-2-oxopropyl phosphate-binding positions include glycine 197 and 218–219 (GH).

The protein belongs to the PNP synthase family. In terms of assembly, homooctamer; tetramer of dimers.

Its subcellular location is the cytoplasm. The enzyme catalyses 3-amino-2-oxopropyl phosphate + 1-deoxy-D-xylulose 5-phosphate = pyridoxine 5'-phosphate + phosphate + 2 H2O + H(+). The protein operates within cofactor biosynthesis; pyridoxine 5'-phosphate biosynthesis; pyridoxine 5'-phosphate from D-erythrose 4-phosphate: step 5/5. Its function is as follows. Catalyzes the complicated ring closure reaction between the two acyclic compounds 1-deoxy-D-xylulose-5-phosphate (DXP) and 3-amino-2-oxopropyl phosphate (1-amino-acetone-3-phosphate or AAP) to form pyridoxine 5'-phosphate (PNP) and inorganic phosphate. The chain is Pyridoxine 5'-phosphate synthase from Pseudomonas fluorescens (strain Pf0-1).